The primary structure comprises 159 residues: Ribosomal RNA large subunit methyltransferase H (159 aa).

Residues leucine 76, glycine 108, and 127–132 contribute to the S-adenosyl-L-methionine site; that span reads FSKMTF.

The protein belongs to the RNA methyltransferase RlmH family. Homodimer.

Its subcellular location is the cytoplasm. It catalyses the reaction pseudouridine(1915) in 23S rRNA + S-adenosyl-L-methionine = N(3)-methylpseudouridine(1915) in 23S rRNA + S-adenosyl-L-homocysteine + H(+). Functionally, specifically methylates the pseudouridine at position 1915 (m3Psi1915) in 23S rRNA. The chain is Ribosomal RNA large subunit methyltransferase H from Clostridium botulinum (strain Kyoto / Type A2).